We begin with the raw amino-acid sequence, 123 residues long: UPF0102 protein APJL_1381 (123 aa).

Belongs to the UPF0102 family.

This is UPF0102 protein APJL_1381 from Actinobacillus pleuropneumoniae serotype 3 (strain JL03).